Here is a 376-residue protein sequence, read N- to C-terminus: Cytochrome c oxidase subunit 2, mitochondrial (376 aa).

A helical transmembrane segment spans residues I164 to W184. The Mitochondrial matrix segment spans residues C185–E204. The chain crosses the membrane as a helical span at residues I205 to L225. At L226–Q376 the chain is on the mitochondrial intermembrane side. Cu cation contacts are provided by H309, C344, E346, C348, H352, and M355. E346 contributes to the Mg(2+) binding site.

This sequence belongs to the cytochrome c oxidase subunit 2 family. As to quaternary structure, component of the cytochrome c oxidase (complex IV, CIV), a multisubunit enzyme composed of a catalytic core of 3 subunits and several supernumerary subunits. The complex exists as a monomer or a dimer and forms supercomplexes (SCs) in the inner mitochondrial membrane with ubiquinol-cytochrome c oxidoreductase (cytochrome b-c1 complex, complex III, CIII). Cu cation serves as cofactor.

It localises to the mitochondrion inner membrane. The catalysed reaction is 4 Fe(II)-[cytochrome c] + O2 + 8 H(+)(in) = 4 Fe(III)-[cytochrome c] + 2 H2O + 4 H(+)(out). Its function is as follows. Component of the cytochrome c oxidase, the last enzyme in the mitochondrial electron transport chain which drives oxidative phosphorylation. The respiratory chain contains 3 multisubunit complexes succinate dehydrogenase (complex II, CII), ubiquinol-cytochrome c oxidoreductase (cytochrome b-c1 complex, complex III, CIII) and cytochrome c oxidase (complex IV, CIV), that cooperate to transfer electrons derived from NADH and succinate to molecular oxygen, creating an electrochemical gradient over the inner membrane that drives transmembrane transport and the ATP synthase. Cytochrome c oxidase is the component of the respiratory chain that catalyzes the reduction of oxygen to water. Electrons originating from reduced cytochrome c in the intermembrane space (IMS) are transferred via the dinuclear copper A center (CU(A)) of subunit 2 and heme A of subunit 1 to the active site in subunit 1, a binuclear center (BNC) formed by heme A3 and copper B (CU(B)). The BNC reduces molecular oxygen to 2 water molecules using 4 electrons from cytochrome c in the IMS and 4 protons from the mitochondrial matrix. This chain is Cytochrome c oxidase subunit 2, mitochondrial (COX2), found in Vigna unguiculata (Cowpea).